We begin with the raw amino-acid sequence, 175 residues long: MKFLSTAAALLVCLAPVSTTARSLDFFKSSQSPIQAQAKSVPGNNPLEYCNDPSGDILDIKQVDLSPNPPLPGKTLAITASGTLREKIEDGAYVLLEVKYGLITLVRQTADLCEQLVNVELKCPLGPGDMTLTKQVDLPKQIPPGKYTVQADVFNSDGEHITCLKALNIEFKGPF.

Residues 1-21 (MKFLSTAAALLVCLAPVSTTA) form the signal peptide. The propeptide occupies 22–37 (RSLDFFKSSQSPIQAQ).

It belongs to the NPC2 family. Monomer.

The protein resides in the cytoplasm. It is found in the cytoplasmic vesicle. It localises to the golgi apparatus. Catalyzes the intermembrane transfer of phosphatidylglycerol and phosphatidylinositol. The chain is Phosphatidylglycerol/phosphatidylinositol transfer protein (pltp) from Aspergillus oryzae (strain ATCC 42149 / RIB 40) (Yellow koji mold).